A 378-amino-acid chain; its full sequence is Chaperone protein DnaJ 1 (378 aa).

Positions 4 to 68 (DYYGILGVDR…DKRRIVDMGG (65 aa)) constitute a J domain. The CR-type zinc finger occupies 129–211 (GVKKDLTLDT…CAGDGRVRAR (83 aa)). 8 residues coordinate Zn(2+): Cys142, Cys145, Cys159, Cys162, Cys185, Cys188, Cys199, and Cys202. 4 CXXCXGXG motif repeats span residues 142 to 149 (CSKCHGSG), 159 to 166 (CGTCHGSG), 185 to 192 (CHTCNGTG), and 199 to 206 (CDECAGDG).

Belongs to the DnaJ family. In terms of assembly, homodimer. Zn(2+) serves as cofactor.

It localises to the cytoplasm. Participates actively in the response to hyperosmotic and heat shock by preventing the aggregation of stress-denatured proteins and by disaggregating proteins, also in an autonomous, DnaK-independent fashion. Unfolded proteins bind initially to DnaJ; upon interaction with the DnaJ-bound protein, DnaK hydrolyzes its bound ATP, resulting in the formation of a stable complex. GrpE releases ADP from DnaK; ATP binding to DnaK triggers the release of the substrate protein, thus completing the reaction cycle. Several rounds of ATP-dependent interactions between DnaJ, DnaK and GrpE are required for fully efficient folding. Also involved, together with DnaK and GrpE, in the DNA replication of plasmids through activation of initiation proteins. The protein is Chaperone protein DnaJ 1 of Corynebacterium efficiens (strain DSM 44549 / YS-314 / AJ 12310 / JCM 11189 / NBRC 100395).